Here is a 186-residue protein sequence, read N- to C-terminus: Ribosome-recycling factor (186 aa).

It belongs to the RRF family.

The protein localises to the cytoplasm. Functionally, responsible for the release of ribosomes from messenger RNA at the termination of protein biosynthesis. May increase the efficiency of translation by recycling ribosomes from one round of translation to another. The sequence is that of Ribosome-recycling factor from Amoebophilus asiaticus (strain 5a2).